The sequence spans 497 residues: MAKVNVRDFIEEQYGLFINGEFQASESGDTLTVTNPANGEDLAKVAKASKSDVDKAVQAAQDAFDSWSKTSKEERADYLLEISRRIHEKVEHFATIESLQNGKPYRETSTIDVPLTANQFKYFASVLTTDEGSVNEIDENTMSLVVNEPVGVVGAVVAWNFPILLASWKLAPALAAGNTIVIQPSSSTPLSLIELAKIFQEVLPKGVVNVLTGKGSESGDAIFNHEGVNKLSFTGSTDVGYGVAKAGAERIVPTTLELGGKSANIIFDDANLDQVVEGAQLGILFNQGEVCSAGSRLLVQSSIYDKVMPKLKEAFENIKVGDPFDEDVKMSAQTGPEQLEKIESYVKIAEEDSNANILTGGHRLTDNGRDKGYFFEPTIIEIKDNSHQLAQEEIFGPVVVVEKFEDEAEAIKIANDSEYGLAGGIFTTNINRALNVAKAMRTGRIWINTYNQFPAGAPFGGYKKSGIGREIYKDAIKNYQQVKNIFIDTSNQTKGLY.

213-219 contributes to the NAD(+) binding site; that stretch reads GKGSESG. Active-site residues include Glu257 and Cys291.

The protein belongs to the aldehyde dehydrogenase family.

It carries out the reaction an aldehyde + NAD(+) + H2O = a carboxylate + NADH + 2 H(+). The polypeptide is Putative aldehyde dehydrogenase AldA (aldA) (Staphylococcus haemolyticus (strain JCSC1435)).